Consider the following 596-residue polypeptide: Chaperonin 60 subunit beta 2, chloroplastic (596 aa).

A chloroplast-targeting transit peptide spans 1–50; sequence MASTFTATSSLGSLLAPNAIKLSSATSISSSSFGRRHNVCVRRSRPAIVC. A phosphoserine mark is found at Ser-97 and Ser-474. The stretch at 388–489 forms a coiled coil; it reads TQEAVNKRVV…KDTLENDEEK (102 aa).

It belongs to the chaperonin (HSP60) family. Part of the Cpn60 complex composed of 7 alpha and 7 beta subunits. Can also form a complex composed of 14 beta subunits only. Both complexes show ATPase activity. The Cpn60 complex interacts with the Cpn10 complex. Interacts with RAB during heat stress.

The protein localises to the plastid. Its subcellular location is the chloroplast stroma. Its function is as follows. Involved in protein assisted folding. The chain is Chaperonin 60 subunit beta 2, chloroplastic (CPN60B2) from Arabidopsis thaliana (Mouse-ear cress).